Reading from the N-terminus, the 132-residue chain is uncharacterized protein (132 aa).

Residues arginine 17 to alanine 75 form a disordered region. Positions alanine 51–alanine 65 are enriched in low complexity.

As to expression, expressed exclusively in heart.

It is found in the cytoplasm. This is an uncharacterized protein from Homo sapiens (Human).